The primary structure comprises 274 residues: Ribosomal RNA small subunit methyltransferase A (274 aa).

Residues H15, L17, G42, E64, D89, and N109 each coordinate S-adenosyl-L-methionine.

The protein belongs to the class I-like SAM-binding methyltransferase superfamily. rRNA adenine N(6)-methyltransferase family. RsmA subfamily.

The protein localises to the cytoplasm. It carries out the reaction adenosine(1518)/adenosine(1519) in 16S rRNA + 4 S-adenosyl-L-methionine = N(6)-dimethyladenosine(1518)/N(6)-dimethyladenosine(1519) in 16S rRNA + 4 S-adenosyl-L-homocysteine + 4 H(+). Functionally, specifically dimethylates two adjacent adenosines (A1518 and A1519) in the loop of a conserved hairpin near the 3'-end of 16S rRNA in the 30S particle. May play a critical role in biogenesis of 30S subunits. This chain is Ribosomal RNA small subunit methyltransferase A, found in Synechococcus sp. (strain RCC307).